Here is a 475-residue protein sequence, read N- to C-terminus: Transmembrane protein 181 (475 aa).

A run of 9 helical transmembrane segments spans residues histidine 16–isoleucine 36, glutamate 131–phenylalanine 151, leucine 175–alanine 195, serine 214–valine 234, leucine 245–isoleucine 265, phenylalanine 276–isoleucine 296, methionine 320–valine 340, leucine 356–leucine 376, and phenylalanine 401–proline 421. The residue at position 443 (serine 443) is a Phosphoserine.

The protein belongs to the TMEM181 family. As to quaternary structure, interacts with cytolethal distending toxin.

The protein resides in the membrane. Mediates action of cytolethal distending toxins (CDT), which are secreted by many pathogenic bacteria. Expression level of TMEM181 is rate-limiting for intoxication. This is Transmembrane protein 181 (TMEM181) from Homo sapiens (Human).